The chain runs to 164 residues: Thiol peroxidase (164 aa).

A Thioredoxin domain is found at 18–163; that stretch reads INEGDFAPDF…FDAALAAYKN (146 aa). C60 (cysteine sulfenic acid (-SOH) intermediate) is an active-site residue. The cysteines at positions 60 and 93 are disulfide-linked.

Belongs to the peroxiredoxin family. Tpx subfamily. In terms of assembly, homodimer.

The catalysed reaction is a hydroperoxide + [thioredoxin]-dithiol = an alcohol + [thioredoxin]-disulfide + H2O. Its function is as follows. Thiol-specific peroxidase that catalyzes the reduction of hydrogen peroxide and organic hydroperoxides to water and alcohols, respectively. Plays a role in cell protection against oxidative stress by detoxifying peroxides. This chain is Thiol peroxidase, found in Staphylococcus aureus (strain Mu50 / ATCC 700699).